We begin with the raw amino-acid sequence, 77 residues long: Defensin-like protein 91 (77 aa).

Positions Met-1–Ala-27 are cleaved as a signal peptide. 4 disulfides stabilise this stretch: Cys-38–Cys-75, Cys-43–Cys-64, Cys-49–Cys-73, and Cys-53–Cys-74.

This sequence belongs to the DEFL family.

Its subcellular location is the secreted. This Arabidopsis thaliana (Mouse-ear cress) protein is Defensin-like protein 91 (LCR47).